A 385-amino-acid chain; its full sequence is Transcription termination factor 2, mitochondrial (385 aa).

The transit peptide at 1 to 35 (MLWKLLLRSQSCRLCSFRKMRSPPKYRPFLACFTY) directs the protein to the mitochondrion.

This sequence belongs to the mTERF family. As to quaternary structure, monomer. As to expression, expressed in skeletal muscle, heart, liver and pancreas.

Its subcellular location is the mitochondrion. The protein localises to the mitochondrion matrix. It localises to the mitochondrion nucleoid. Binds mitochondrial DNA and plays a role in the regulation of transcription of mitochondrial mRNA and rRNA species. The polypeptide is Transcription termination factor 2, mitochondrial (MTERF2) (Homo sapiens (Human)).